The primary structure comprises 276 residues: RRP15-like protein (276 aa).

Disordered regions lie at residues 1–132 and 201–276; these read MALL…QLRV and KRAK…DGEE. Composition is skewed to basic and acidic residues over residues 75–95 and 226–245; these read FQKD…KADV and KGSS…DFMT. Residues 254–276 show a composition bias toward acidic residues; sequence EEDDDEEGHNDEADDSDYDDGEE. Ser269 bears the Phosphoserine mark. Tyr271 is modified (phosphotyrosine).

It belongs to the RRP15 family.

The polypeptide is RRP15-like protein (Drosophila melanogaster (Fruit fly)).